The chain runs to 344 residues: Arginine N-succinyltransferase (344 aa).

Leu125 contacts succinyl-CoA. Catalysis depends on His229, which acts as the Proton donor.

The protein belongs to the arginine N-succinyltransferase family.

The catalysed reaction is succinyl-CoA + L-arginine = N(2)-succinyl-L-arginine + CoA + H(+). It participates in amino-acid degradation; L-arginine degradation via AST pathway; L-glutamate and succinate from L-arginine: step 1/5. In terms of biological role, catalyzes the transfer of succinyl-CoA to arginine to produce N(2)-succinylarginine. This is Arginine N-succinyltransferase from Escherichia coli (strain 55989 / EAEC).